The chain runs to 355 residues: Phosphoribosylformylglycinamidine cyclo-ligase (355 aa).

It belongs to the AIR synthase family.

The protein localises to the cytoplasm. It catalyses the reaction 2-formamido-N(1)-(5-O-phospho-beta-D-ribosyl)acetamidine + ATP = 5-amino-1-(5-phospho-beta-D-ribosyl)imidazole + ADP + phosphate + H(+). Its pathway is purine metabolism; IMP biosynthesis via de novo pathway; 5-amino-1-(5-phospho-D-ribosyl)imidazole from N(2)-formyl-N(1)-(5-phospho-D-ribosyl)glycinamide: step 2/2. This chain is Phosphoribosylformylglycinamidine cyclo-ligase, found in Paraburkholderia phymatum (strain DSM 17167 / CIP 108236 / LMG 21445 / STM815) (Burkholderia phymatum).